We begin with the raw amino-acid sequence, 266 residues long: Isoprenyl transferase (266 aa).

Aspartate 36 is a catalytic residue. Residue aspartate 36 coordinates Mg(2+). Residues 37 to 40 (GNGR), tryptophan 41, arginine 49, histidine 53, and 81 to 83 (STE) contribute to the substrate site. The Proton acceptor role is filled by asparagine 84. Substrate-binding positions include tryptophan 85, arginine 87, arginine 204, and 210–212 (RIS). Mg(2+) is bound at residue glutamate 223.

Belongs to the UPP synthase family. As to quaternary structure, homodimer. Requires Mg(2+) as cofactor.

Its function is as follows. Catalyzes the condensation of isopentenyl diphosphate (IPP) with allylic pyrophosphates generating different type of terpenoids. The chain is Isoprenyl transferase from Prochlorococcus marinus (strain SARG / CCMP1375 / SS120).